The primary structure comprises 364 residues: MSGNSIGQNFVVTTFGESHGVALGCIIDGCPPGLELTEADMQHDLDRRRPGTSRYTTARREPDEVRILSGVFEGKTTGTSIGLLIENTDQRSQDYSNIKDLFRPGHADYTYQQKYGLRDYRGGGRSSARETAMRVAAGAVAKKYLKQVHGINIQGYMSQLGPISAETLDFSQIEQNAFFFPDASKLEALDEYMRELKKSGDSIGAKISVVATGVPVGLGEPVFDRLDADIAHALMGINAVKGVEIGDGFGVVTQKGSEGRDLMSPLGFESNHAGGILGGISSGQPIVAHIALKPTSSISVPGQSMTAQGEMAEVVTKGRHDPCVGIRAVPIAEAMLAIVLMDHLLRHRAQNQDVCSHTPILGMR.

The segment at 41–60 is disordered; that stretch reads MQHDLDRRRPGTSRYTTARR. NADP(+) contacts are provided by Arg-48 and Arg-54. FMN is bound by residues 125–127, 238–239, Gly-278, 293–297, and Arg-319; these read RSS, NA, and KPTSS.

The protein belongs to the chorismate synthase family. Homotetramer. Requires FMNH2 as cofactor.

The enzyme catalyses 5-O-(1-carboxyvinyl)-3-phosphoshikimate = chorismate + phosphate. It participates in metabolic intermediate biosynthesis; chorismate biosynthesis; chorismate from D-erythrose 4-phosphate and phosphoenolpyruvate: step 7/7. Catalyzes the anti-1,4-elimination of the C-3 phosphate and the C-6 proR hydrogen from 5-enolpyruvylshikimate-3-phosphate (EPSP) to yield chorismate, which is the branch point compound that serves as the starting substrate for the three terminal pathways of aromatic amino acid biosynthesis. This reaction introduces a second double bond into the aromatic ring system. The polypeptide is Chorismate synthase (Shewanella sp. (strain MR-4)).